The sequence spans 52 residues: Phospholamban (52 aa).

N-acetylmethionine is present on Met-1. Over Met-1–Leu-31 the chain is Cytoplasmic. Residue Ser-16 is modified to Phosphoserine; by PKA and DMPK. Positions Ser-16–Gln-22 are involved in HAX1 binding. The residue at position 17 (Thr-17) is a Phosphothreonine; by CaMK2. The helical transmembrane segment at Phe-32 to Leu-52 threads the bilayer. Residue Cys-36 is the site of S-palmitoyl cysteine attachment.

The protein belongs to the phospholamban family. Homopentamer. Can also form heterooligomers with other sarcoplasmic/endoplasmic reticulum calcium ATPase (SERCA) regulators ARLN, ERLN, SLN and STRIT1/DWORF. Monomer. Interacts with HAX1. Interacts as a monomer with ATP2A2; the interaction decreases ATP2A2 Ca(2+) affinity. Interacts with VMP1; VMP1 competes with PLN and SLN to prevent them from forming an inhibitory complex with ATP2A2. Interacts with S100A1 in a Ca(2+)-dependent manner. In terms of processing, phosphorylation by PKA abolishes the inhibition of ATP2A2-mediated calcium uptake. Phosphorylated at Thr-17 by CaMK2, and in response to beta-adrenergic stimulation. Phosphorylation by DMPK may stimulate sarcoplasmic reticulum calcium uptake in cardiomyocytes. Post-translationally, palmitoylated by ZDHHC16, promoting formation of the homopentamer. In elongated spermatids, proteolytically cleaved by SPPL2C which modulates intracellular Ca(2+) homeostasis. Heart muscle (at protein level).

It localises to the endoplasmic reticulum membrane. It is found in the sarcoplasmic reticulum membrane. The protein resides in the mitochondrion membrane. Its subcellular location is the membrane. Its function is as follows. Reversibly inhibits the activity of ATP2A2/SERCA2 in cardiac sarcoplasmic reticulum by decreasing the apparent affinity of the ATPase for Ca(2+). Binds preferentially to the ATP-bound E1 conformational form of ATP2A2 which predominates at low Ca(2+) concentrations during the diastolic phase of the cardiac cycle. Inhibits ATP2A2 Ca(2+) affinity by disrupting its allosteric activation by ATP. Modulates the contractility of the heart muscle in response to physiological stimuli via its effects on ATP2A2. Modulates calcium re-uptake during muscle relaxation and plays an important role in calcium homeostasis in the heart muscle. The degree of ATP2A2 inhibition depends on the oligomeric state of PLN. ATP2A2 inhibition is alleviated by PLN phosphorylation. Also inhibits the activity of ATP2A3/SERCA3. Controls intracellular Ca(2+) levels in elongated spermatids and may play a role in germ cell differentiation. In the thalamic reticular nucleus of the brain, plays a role in the regulation of sleep patterns and executive functioning. The chain is Phospholamban from Homo sapiens (Human).